Reading from the N-terminus, the 266-residue chain is Glutamate racemase (266 aa).

Residues 9–10 (DS) and 41–42 (YG) each bind substrate. Cys72 acts as the Proton donor/acceptor in catalysis. 73 to 74 (NT) lines the substrate pocket. The active-site Proton donor/acceptor is the Cys183. Substrate is bound at residue 184–185 (TH).

This sequence belongs to the aspartate/glutamate racemases family.

It carries out the reaction L-glutamate = D-glutamate. It functions in the pathway cell wall biogenesis; peptidoglycan biosynthesis. In terms of biological role, provides the (R)-glutamate required for cell wall biosynthesis. The sequence is that of Glutamate racemase from Listeria monocytogenes serotype 4a (strain HCC23).